Consider the following 2225-residue polypeptide: Genome polyprotein (2225 aa).

Short sequence motifs ((L)YPX(n)L motif) lie at residues 167–171 and 200–205; these read YPHGL and YPVWEL. Residues 766 to 836 are involved in P1-2A pentamerization; it reads MMSRIAAGDL…PRKMKGLFSQ (71 aa). Residues 1011–1031 traverse the membrane as a helical segment; sequence TVDIVNIVLCFVKSGILLYVI. Residues 1043–1070 are membrane-penetrating ability; the sequence is IGLLRVMNYADIGCSVISCGKVFSKMLE. Positions 1127-1152 form a coiled coil; it reads KKKDVLNVLKDNQQRIERAIEEADNF. One can recognise an SF3 helicase domain in the interval 1204 to 1366; that stretch reads HQKLKNLGSI…SFFQNPHNDM (163 aa). ATP is bound at residue 1230–1237; sequence GKRGGGKS. The helical transmembrane segment at 1460-1480 threads the bilayer; sequence WVAVGAAVGILGVLVGGWFVY. Tyrosine 1497 carries the post-translational modification O-(5'-phospho-RNA)-tyrosine. The 215-residue stretch at 1512–1726 folds into the Peptidase C3 domain; the sequence is DPVESQSTLE…VAKLVTQEMF (215 aa). Catalysis depends on for protease 3C activity residues histidine 1561, aspartate 1601, and cysteine 1689. One can recognise a RdRp catalytic domain in the interval 1974–2095; that stretch reads DVGLDLDFSA…VFSRDIQIDN (122 aa).

This sequence belongs to the picornaviridae polyprotein family. Homodimer. Homomultimer; probably interacts with membranes in a multimeric form. Seems to assemble into amyloid-like fibers. As to quaternary structure, homodimer. Monomer. Interacts with protein 3CD. In terms of assembly, interacts with host ACBD3. Interacts with protein 3AB. As to quaternary structure, interacts with human MAVS. In terms of assembly, homodimer; disulfide-linked. Homopentamer. Homooligomer. As to quaternary structure, interacts with capsid protein VP2. Interacts with capsid protein VP3. In terms of assembly, interacts with capsid protein VP1. Interacts with capsid protein VP3. Interacts with capsid protein VP1. Interacts with capsid protein VP2. Post-translationally, specific enzymatic cleavages by viral protease in vivo yield a variety of precursors and mature proteins. Polyprotein processing intermediates are produced, such as P1-2A which is a functional precursor of the structural proteins, VP0 which is a VP4-VP2 precursor, VP1-2A precursor, 3ABC precursor which is a stable and catalytically active precursor of 3A, 3B and 3C proteins, 3AB and 3CD precursors. The assembly signal 2A is removed from VP1-2A by a host protease, possibly host Cathepsin L. This cleavage occurs over a region of 3 amino-acids probably generating VP1 proteins with heterogeneous C-termini. In terms of processing, during virion maturation, immature virions are rendered infectious following cleavage of VP0 into VP4 and VP2. This maturation seems to be an autocatalytic event triggered by the presence of RNA in the capsid and is followed by a conformational change of the particle. The assembly signal 2A is removed from VP1-2A by a host protease, possibly host Cathepsin L in naked virions. This cleavage does not occur in enveloped virions. This cleavage occurs over a region of 3 amino-acids probably generating VP1 proteins with heterogeneous C-termini. Post-translationally, VPg is uridylylated prior to priming replication into VPg-pUpU. In terms of processing, unlike other picornaviruses, does not seem to be myristoylated.

The protein localises to the virion. It localises to the host endosome. Its subcellular location is the host multivesicular body. It is found in the host membrane. The protein resides in the host mitochondrion outer membrane. The protein localises to the host cytoplasm. It localises to the host cytoplasmic vesicle membrane. It carries out the reaction RNA(n) + a ribonucleoside 5'-triphosphate = RNA(n+1) + diphosphate. The enzyme catalyses a ribonucleoside 5'-triphosphate + H2O = a ribonucleoside 5'-diphosphate + phosphate + H(+). The catalysed reaction is Selective cleavage of Gln-|-Gly bond in the poliovirus polyprotein. In other picornavirus reactions Glu may be substituted for Gln, and Ser or Thr for Gly.. In terms of biological role, capsid proteins VP1, VP2, and VP3 form a closed capsid enclosing the viral positive strand RNA genome. All these proteins contain a beta-sheet structure called beta-barrel jelly roll. Together they form an icosahedral capsid (T=3) composed of 60 copies of each VP1, VP2, and VP3, with a diameter of approximately 300 Angstroms. VP1 is situated at the 12 fivefold axes, whereas VP2 and VP3 are located at the quasi-sixfold axes. The naked capsid interacts with the host receptor HAVCR1 to provide virion attachment to and probably entry into the target cell. VP0 precursor is a component of the immature procapsids. Its function is as follows. Plays a role in the assembly of the 12 pentamers into an icosahedral structure. Has not been detected in mature virions, supposedly owing to its small size. Functionally, precursor component of immature procapsids that corresponds to an extended form of the structural protein VP1. After maturation, possibly by the host Cathepsin L, the assembly signal 2A is cleaved to give rise to the mature VP1 protein. In terms of biological role, functions as a viroporin. Affects membrane integrity and causes an increase in membrane permeability. Involved in host intracellular membrane rearrangements probably to give rise to the viral factories. Does not disrupt calcium homeostasis or glycoprotein trafficking. Antagonizes the innate immune response of the host by suppressing IFN-beta synthesis, which it achieves by interfering with the RIG-I/IFIH1 pathway. Affects membrane integrity and causes an increase in membrane permeability. Its function is as follows. Associates with and induces structural rearrangements of intracellular membranes. Displays RNA-binding activity. Functionally, the precursor 3ABC is targeted to the mitochondrial membrane where protease 3C activity cleaves and inhibits the host antiviral protein MAVS, thereby disrupting activation of IRF3 through the IFIH1/MDA5 pathway. In vivo, the protease activity of 3ABC precursor is more efficient in cleaving the 2BC precursor than that of protein 3C. The 3ABC precursor may therefore play a role in the proteolytic processing of the polyprotein. Possible viroporin. In terms of biological role, interacts with the 3CD precursor and with RNA structures found at both the 5'- and 3'-termini of the viral genome. Since the 3AB precursor contains the hydrophobic domain 3A, it probably anchors the whole viral replicase complex to intracellular membranes on which viral RNA synthesis occurs. May serve as membrane anchor to the 3AB and 3ABC precursors via its hydrophobic domain. May interact with RNA. Its function is as follows. Acts as a primer for viral RNA replication and remains covalently bound to viral genomic RNA. VPg is uridylylated prior to priming replication into VPg-pUpU. The VPg-pUpU is then used as primer on the genomic RNA poly(A) by the RNA-dependent RNA polymerase to replicate the viral genome. Functionally, cysteine protease that generates mature viral proteins from the precursor polyprotein. In addition to its proteolytic activity, it binds to viral RNA, and thus influences viral genome replication. RNA and substrate bind cooperatively to the protease. Cleaves IKBKG/NEMO to impair innate immune signaling. Cleaves host PABPC1 which may participate in the switch of viral translation to RNA synthesis. In terms of biological role, interacts with the 3AB precursor and with RNA structures found at both the 5'- and 3'-termini of the viral genome. Disrupts TLR3 signaling by degrading the host adapter protein TICAM1/TRIF. RNA-directed RNA polymerase 3D-POL replicates genomic and antigenomic RNA by recognizing replications specific signals. In Homo sapiens (Human), this protein is Genome polyprotein.